Here is a 256-residue protein sequence, read N- to C-terminus: Peroxisomal membrane protein PMP30B (256 aa).

This sequence belongs to the peroxin-11 family.

The protein localises to the peroxisome membrane. Its function is as follows. Involved in peroxisomal proliferation. Could participate in peroxisomal elongation or fission. May be involved in parceling of peroxisomes into regular quanta. The chain is Peroxisomal membrane protein PMP30B (PEX11B) from Candida boidinii (Yeast).